A 102-amino-acid polypeptide reads, in one-letter code: Small ribosomal subunit protein uS10 (102 aa).

This sequence belongs to the universal ribosomal protein uS10 family. As to quaternary structure, part of the 30S ribosomal subunit.

Involved in the binding of tRNA to the ribosomes. The polypeptide is Small ribosomal subunit protein uS10 (Clostridium kluyveri (strain NBRC 12016)).